A 313-amino-acid chain; its full sequence is L-lactate dehydrogenase 1 (313 aa).

NAD(+)-binding residues include Val15, Asp36, Arg41, and Tyr66. Substrate contacts are provided by residues Gln83, Arg89, and 121–124 (NPVD). NAD(+) contacts are provided by residues 119–121 (ASN) and Ser144. 149–152 (DTAR) contacts substrate. Positions 154 and 169 each coordinate beta-D-fructose 1,6-bisphosphate. Catalysis depends on His176, which acts as the Proton acceptor. Phosphotyrosine is present on Tyr218. Position 227 (Thr227) interacts with substrate.

It belongs to the LDH/MDH superfamily. LDH family. Homotetramer.

It is found in the cytoplasm. It carries out the reaction (S)-lactate + NAD(+) = pyruvate + NADH + H(+). It participates in fermentation; pyruvate fermentation to lactate; (S)-lactate from pyruvate: step 1/1. Allosterically activated by fructose 1,6-bisphosphate (FBP). Functionally, catalyzes the conversion of lactate to pyruvate. The polypeptide is L-lactate dehydrogenase 1 (Listeria monocytogenes serotype 4b (strain F2365)).